The sequence spans 126 residues: Probable DNA-directed RNA polymerase II subunit RPB11 (126 aa).

The protein belongs to the archaeal Rpo11/eukaryotic RPB11/RPC19 RNA polymerase subunit family. Component of the RNA polymerase II (Pol II) complex consisting of 12 subunits.

The protein resides in the nucleus. In terms of biological role, DNA-dependent RNA polymerase catalyzes the transcription of DNA into RNA using the four ribonucleoside triphosphates as substrates. Component of RNA polymerase II which synthesizes mRNA precursors and many functional non-coding RNAs. Pol II is the central component of the basal RNA polymerase II transcription machinery. It is composed of mobile elements that move relative to each other. RPB11 is part of the core element with the central large cleft. This chain is Probable DNA-directed RNA polymerase II subunit RPB11, found in Plasmodium falciparum (isolate 3D7).